An 81-amino-acid chain; its full sequence is U10-myrmicitoxin-Mri1b (81 aa).

The signal sequence occupies residues 1-26 (MRLSYISLTLAIIFVMAIVHAPETEA). The propeptide occupies 27-52 (KAYPEADAVAEAIAVGEADAVGVADP). The residue at position 80 (Val-80) is a Valine amide.

The protein belongs to the formicidae venom precursor-01 superfamily. As to expression, expressed by the venom gland.

It is found in the secreted. In terms of biological role, induces paralysis after injection into blowflies (L.caesar), and then death within 24 hours. May have antimicrobial properties, like most ant linear peptides. In Manica rubida (European giant red ant), this protein is U10-myrmicitoxin-Mri1b.